A 500-amino-acid polypeptide reads, in one-letter code: Hepatic triacylglycerol lipase (500 aa).

An N-terminal signal peptide occupies residues 1-21 (MENPLCVSIFLFYCILIQSSA). The interval 23–44 (GQSLGPESFGRRSRAAETNKTP) is disordered. N-linked (GlcNAc...) asparagine glycans are attached at residues asparagine 67 and asparagine 78. The active-site Nucleophile is serine 168. The active-site Charge relay system is aspartate 194. The segment at 254–277 (CHFLELYKHFAKHGLNAITRTVKC) is essential for determining substrate specificity. Histidine 279 (charge relay system) is an active-site residue. One can recognise a PLAT domain in the interval 353 to 487 (YHYQFKIRFI…HPAREKTFVR (135 aa)). N-linked (GlcNAc...) asparagine glycans are attached at residues asparagine 363 and asparagine 398.

Belongs to the AB hydrolase superfamily. Lipase family. In terms of assembly, homodimer.

The protein resides in the secreted. The catalysed reaction is a triacylglycerol + H2O = a diacylglycerol + a fatty acid + H(+). The enzyme catalyses a 1-acyl-sn-glycero-3-phosphocholine + H2O = sn-glycerol 3-phosphocholine + a fatty acid + H(+). It catalyses the reaction a 1,2-diacyl-sn-glycero-3-phosphocholine + H2O = a 2-acyl-sn-glycero-3-phosphocholine + a fatty acid + H(+). It carries out the reaction 1,2,3-tri-(9Z-octadecenoyl)-glycerol + H2O = di-(9Z)-octadecenoylglycerol + (9Z)-octadecenoate + H(+). The catalysed reaction is 1,2-di-(9Z-octadecenoyl)-sn-glycero-3-phosphocholine + H2O = (9Z-octadecenoyl)-sn-glycero-3-phosphocholine + (9Z)-octadecenoate + H(+). The enzyme catalyses 1,2,3-tributanoylglycerol + H2O = dibutanoylglycerol + butanoate + H(+). It catalyses the reaction 1,2-dihexadecanoyl-sn-glycero-3-phosphocholine + H2O = hexadecanoyl-sn-glycero-3-phosphocholine + hexadecanoate + H(+). It carries out the reaction 1,2-di-(9Z-octadecenoyl)-sn-glycerol + H2O = 2-(9Z-octadecenoyl)-glycerol + (9Z)-octadecenoate + H(+). The catalysed reaction is 1,2,3-tri-(9Z-octadecenoyl)-glycerol + H2O = 2,3-di-(9Z)-octadecenoyl-sn-glycerol + (9Z)-octadecenoate + H(+). The enzyme catalyses 1-(9Z-octadecenoyl)-sn-glycero-3-phospho-L-serine + H2O = sn-glycero-3-phospho-L-serine + (9Z)-octadecenoate + H(+). It catalyses the reaction 1-hexadecanoyl-sn-glycero-3-phosphocholine + H2O = sn-glycerol 3-phosphocholine + hexadecanoate + H(+). It carries out the reaction 1,3-di-(9Z-octadecenoyl)-glycerol + H2O = 3-(9Z-octadecenoyl)-sn-glycerol + (9Z)-octadecenoate + H(+). In terms of biological role, catalyzes the hydrolysis of triglycerides and phospholipids present in circulating plasma lipoproteins, including chylomicrons, intermediate density lipoproteins (IDL), low density lipoproteins (LDL) of large size and high density lipoproteins (HDL), releasing free fatty acids (FFA) and smaller lipoprotein particles. Also exhibits lysophospholipase activity. Can hydrolyze both neutral lipid and phospholipid substrates but shows a greater binding affinity for neutral lipid substrates than phospholipid substrates. In native LDL, preferentially hydrolyzes the phosphatidylcholine species containing polyunsaturated fatty acids at sn-2 position. In Bos taurus (Bovine), this protein is Hepatic triacylglycerol lipase (LIPC).